The sequence spans 208 residues: N-hydroxyputrescine acetyltransferase (208 aa).

Belongs to the IucB family.

It carries out the reaction N-hydroxyputrescine + acetyl-CoA = N(1)-acetyl-N(1)-hydroxyputrescine + CoA. It participates in siderophore biosynthesis. Functionally, N-acetyltransferase involved in the biosynthesis of fimsbactin A, the major siderophore produced by A.baumannii. Catalyzes the acetylation of N-hydroxyputrescine to form N(1)-acetyl-N(1)-hydroxyputrescine (ahPutr). The chain is N-hydroxyputrescine acetyltransferase from Acinetobacter baumannii (strain ATCC 17978 / DSM 105126 / CIP 53.77 / LMG 1025 / NCDC KC755 / 5377).